Consider the following 380-residue polypeptide: N-acetylaspartylglutamate synthase A (380 aa).

An ATP-grasp domain is found at 115–300 (FQELAGHGVP…VGAIIADYAM (186 aa)). Residues lysine 154, 189–199 (QKYVKESHGKD), and arginine 215 each bind ATP. Positions 260, 273, and 275 each coordinate Mg(2+). Positions 260, 273, and 275 each coordinate Mn(2+). Serine 319 carries the post-translational modification Phosphoserine. Positions 345–370 (GSTSSESEPELGEARDSSVKTMGAPP) are disordered.

Belongs to the RimK family. Mg(2+) is required as a cofactor. Mn(2+) serves as cofactor. As to expression, highly expressed in spinal cord and brain.

The protein resides in the cytoplasm. It carries out the reaction N-acetyl-L-aspartate + L-glutamate + ATP = N-acetyl-L-aspartyl-L-glutamate + ADP + phosphate + H(+). The catalysed reaction is N-acetyl-L-aspartate + 2 L-glutamate + 2 ATP = N-acetyl-L-aspartyl-L-glutamyl-L-glutamate + 2 ADP + 2 phosphate + 2 H(+). Functionally, catalyzes the synthesis of N-acetyl-L-aspartyl-L-glutamate (NAAG) and N-acetyl-L-aspartyl-L-glutamyl-L-glutamate. The chain is N-acetylaspartylglutamate synthase A (Rimkla) from Mus musculus (Mouse).